Reading from the N-terminus, the 849-residue chain is Membrane protein-large ribosomal subunit bL9 fusion protein (849 aa).

Residues 1-680 (MFSKNKHNTK…TQLEGTNIKT (680 aa)) form a unknown region. 2 consecutive transmembrane segments (helical) span residues 11 to 31 (FIVI…FDFQ) and 64 to 84 (IIFF…IISF). The GGDEF domain occupies 214-342 (KTLAIAMIAF…GGDQVVVNIE (129 aa)). Positions 681 to 849 (VTDTLKHFLK…FLNVTERKSK (169 aa)) are large ribosomal subunit protein bL9.

Belongs to the bacterial ribosomal protein bL9 family.

It localises to the cell membrane. In terms of biological role, binds to the 23S rRNA. This Aster yellows witches'-broom phytoplasma (strain AYWB) protein is Membrane protein-large ribosomal subunit bL9 fusion protein.